Consider the following 256-residue polypeptide: MNDIWWQTEGQGNCHLVLLHGWGLNAEVWNCIREELSAHFTLHLVDLPGFGRSQGFGAMSLEQMAKHVLKQAPDKAVWLGWSLGGLVASQVALTHPERVQALVTVASSPCFSAREAWPGIKPDILAGFQQQLSEDFQRTVERFLALQTLGTETARQDARTLKSAVLALPMPEVAVLNGGLEILKTADLREPLKSLTMPFLRLYGYLDGLVPRKVVPMLDAAWPESESQVFAKAAHAPFISHPGEFCQALMALKQKI.

An AB hydrolase-1 domain is found at 15 to 242 (HLVLLHGWGL…AAHAPFISHP (228 aa)). Residues Trp-22, 82–83 (SL), and 143–147 (FLALQ) each bind substrate. Residue Ser-82 is the Nucleophile of the active site. Active-site residues include Asp-207 and His-235. A substrate-binding site is contributed by His-235.

This sequence belongs to the AB hydrolase superfamily. Carboxylesterase BioH family. In terms of assembly, monomer.

It localises to the cytoplasm. The catalysed reaction is 6-carboxyhexanoyl-[ACP] methyl ester + H2O = 6-carboxyhexanoyl-[ACP] + methanol + H(+). It participates in cofactor biosynthesis; biotin biosynthesis. The physiological role of BioH is to remove the methyl group introduced by BioC when the pimeloyl moiety is complete. It allows to synthesize pimeloyl-ACP via the fatty acid synthetic pathway through the hydrolysis of the ester bonds of pimeloyl-ACP esters. The protein is Pimeloyl-[acyl-carrier protein] methyl ester esterase of Citrobacter koseri (strain ATCC BAA-895 / CDC 4225-83 / SGSC4696).